The primary structure comprises 271 residues: MKLFGLIGEKLGHSLSPEIHNKVFKDNNIDGLYNLFSVKKDFENNIVESLKCLGVKGANVTIPYKEKVMDQLDIISHEAKVIGAVNTILIKDGKSYGYNTDYYGFGKMLERAKVNIEGNSFFVLGAGGAARSILKYLEDSKAKKIVLVSRDKEKAFKKFKDFNINFMSYGELEEINEEFALINTTPCGMYPNTNSVAVSEKVIKKFKVAVDIVYNPLETKFLKMAKDNGLKTVDGLFMLVGQGVKAEEIWNGIKVDKSTEEEIYEELKCRF.

Shikimate contacts are provided by residues 14–16 (SLS) and Thr-61. The Proton acceptor role is filled by Lys-65. Shikimate contacts are provided by Asn-86 and Asp-101. Residues 125–129 (GAGGA) and Ile-212 contribute to the NADP(+) site. Residue Tyr-214 coordinates shikimate. Position 235 (Gly-235) interacts with NADP(+).

It belongs to the shikimate dehydrogenase family. Homodimer.

It catalyses the reaction shikimate + NADP(+) = 3-dehydroshikimate + NADPH + H(+). Its pathway is metabolic intermediate biosynthesis; chorismate biosynthesis; chorismate from D-erythrose 4-phosphate and phosphoenolpyruvate: step 4/7. Involved in the biosynthesis of the chorismate, which leads to the biosynthesis of aromatic amino acids. Catalyzes the reversible NADPH linked reduction of 3-dehydroshikimate (DHSA) to yield shikimate (SA). The polypeptide is Shikimate dehydrogenase (NADP(+)) (Clostridium perfringens (strain 13 / Type A)).